The primary structure comprises 124 residues: Large ribosomal subunit protein bL12 (124 aa).

Belongs to the bacterial ribosomal protein bL12 family. As to quaternary structure, homodimer. Part of the ribosomal stalk of the 50S ribosomal subunit. Forms a multimeric L10(L12)X complex, where L10 forms an elongated spine to which 2 to 4 L12 dimers bind in a sequential fashion. Binds GTP-bound translation factors.

In terms of biological role, forms part of the ribosomal stalk which helps the ribosome interact with GTP-bound translation factors. Is thus essential for accurate translation. In Burkholderia cenocepacia (strain HI2424), this protein is Large ribosomal subunit protein bL12.